The primary structure comprises 284 residues: UPF0294 protein VV1_1880 (284 aa).

The protein belongs to the UPF0294 family.

It localises to the cytoplasm. The chain is UPF0294 protein VV1_1880 from Vibrio vulnificus (strain CMCP6).